The sequence spans 414 residues: Protein ABHD18 (414 aa).

An N-terminal signal peptide occupies residues 1–24; sequence MGVSKLDILYRRLLLTKLFIRGWG. Residues N282 and N307 are each glycosylated (N-linked (GlcNAc...) asparagine).

Belongs to the AB hydrolase superfamily.

It localises to the secreted. This is Protein ABHD18 from Homo sapiens (Human).